Here is an 89-residue protein sequence, read N- to C-terminus: Cell division protein FtsB (89 aa).

The Cytoplasmic segment spans residues 1–3 (MRP). A helical transmembrane segment spans residues 4-21 (IIAILIALFILLQYQLWF). The Periplasmic portion of the chain corresponds to 22-89 (AAGGIVSVHH…KNEVFYQIVK (68 aa)). Residues 29 to 62 (VHHLNENINHQIMENQKLKDRNTALLADIDDLKH) adopt a coiled-coil conformation.

The protein belongs to the FtsB family. Part of a complex composed of FtsB, FtsL and FtsQ.

Its subcellular location is the cell inner membrane. Essential cell division protein. May link together the upstream cell division proteins, which are predominantly cytoplasmic, with the downstream cell division proteins, which are predominantly periplasmic. This is Cell division protein FtsB from Coxiella burnetii (strain RSA 493 / Nine Mile phase I).